The chain runs to 520 residues: Fusaridione A cluster transcription factor fsdR (520 aa).

Residues 1–30 (MSTGPPSGISLVSMTTPRKSGQHTPESWSK) form a disordered region.

The protein localises to the nucleus. In terms of biological role, transcription factor that regulates the expression of the gene cluster that mediates the biosynthesis of fusaridione A. The chain is Fusaridione A cluster transcription factor fsdR from Fusarium heterosporum.